Here is a 307-residue protein sequence, read N- to C-terminus: Elongation factor Ts (307 aa).

Residues Thr80–Val83 are involved in Mg(2+) ion dislocation from EF-Tu.

It belongs to the EF-Ts family.

The protein localises to the cytoplasm. Associates with the EF-Tu.GDP complex and induces the exchange of GDP to GTP. It remains bound to the aminoacyl-tRNA.EF-Tu.GTP complex up to the GTP hydrolysis stage on the ribosome. This chain is Elongation factor Ts, found in Methylobacterium sp. (strain 4-46).